The primary structure comprises 363 residues: Carbamoyl phosphate synthase small chain (363 aa).

The segment at 1–171 is CPSase; it reads MEDGTLFAGA…PYRIPGPGPR (171 aa). Positions 39, 219, and 221 each coordinate L-glutamine. The Glutamine amidotransferase type-1 domain maps to 171 to 359; it reads RVVAVDFGAK…LALVDRSAVS (189 aa). C248 acts as the Nucleophile in catalysis. Residues L249, Q252, N290, G292, and Y293 each contribute to the L-glutamine site. Catalysis depends on residues H332 and E334.

Belongs to the CarA family. As to quaternary structure, composed of two chains; the small (or glutamine) chain promotes the hydrolysis of glutamine to ammonia, which is used by the large (or ammonia) chain to synthesize carbamoyl phosphate. Tetramer of heterodimers (alpha,beta)4.

It catalyses the reaction hydrogencarbonate + L-glutamine + 2 ATP + H2O = carbamoyl phosphate + L-glutamate + 2 ADP + phosphate + 2 H(+). The enzyme catalyses L-glutamine + H2O = L-glutamate + NH4(+). The protein operates within amino-acid biosynthesis; L-arginine biosynthesis; carbamoyl phosphate from bicarbonate: step 1/1. Its pathway is pyrimidine metabolism; UMP biosynthesis via de novo pathway; (S)-dihydroorotate from bicarbonate: step 1/3. Its function is as follows. Small subunit of the glutamine-dependent carbamoyl phosphate synthetase (CPSase). CPSase catalyzes the formation of carbamoyl phosphate from the ammonia moiety of glutamine, carbonate, and phosphate donated by ATP, constituting the first step of 2 biosynthetic pathways, one leading to arginine and/or urea and the other to pyrimidine nucleotides. The small subunit (glutamine amidotransferase) binds and cleaves glutamine to supply the large subunit with the substrate ammonia. The protein is Carbamoyl phosphate synthase small chain of Symbiobacterium thermophilum (strain DSM 24528 / JCM 14929 / IAM 14863 / T).